A 1269-amino-acid chain; its full sequence is Clustered mitochondria protein homolog (1269 aa).

A Clu domain is found at 297 to 552 (PSNNGDFMRT…NTNPVDIEFV (256 aa)). Over residues 958–969 (EKKKEESKKAAA) the composition is skewed to basic and acidic residues. The tract at residues 958-989 (EKKKEESKKAAADGEDAGSSGATSKEEEQAKE) is disordered. TPR repeat units lie at residues 1020 to 1053 (VSSY…SERC) and 1147 to 1180 (GQNE…FSKE). The segment at 1211-1269 (LASAQQATKPANISQKKGKKSSSSSPALTNKSVDELLQFIEGPGASKSSKKSKKKHTKN) is disordered. Residues 1213 to 1223 (SAQQATKPANI) are compositionally biased toward polar residues. Positions 1258–1269 (SSKKSKKKHTKN) are enriched in basic residues.

This sequence belongs to the CLU family. As to quaternary structure, may associate with the eukaryotic translation initiation factor 3 (eIF-3) complex.

The protein localises to the cytoplasm. MRNA-binding protein involved in proper cytoplasmic distribution of mitochondria. This chain is Clustered mitochondria protein homolog, found in Kluyveromyces lactis (strain ATCC 8585 / CBS 2359 / DSM 70799 / NBRC 1267 / NRRL Y-1140 / WM37) (Yeast).